Reading from the N-terminus, the 1161-residue chain is DNA-directed RNA polymerase subunit beta (1161 aa).

The protein belongs to the RNA polymerase beta chain family. As to quaternary structure, the RNAP catalytic core consists of 2 alpha, 1 beta, 1 beta' and 1 omega subunit. When a sigma factor is associated with the core the holoenzyme is formed, which can initiate transcription. The RNAP complex including the principal sigma factor HrdB also interacts with RNA-binding protein RbpA.

The enzyme catalyses RNA(n) + a ribonucleoside 5'-triphosphate = RNA(n+1) + diphosphate. In terms of biological role, DNA-dependent RNA polymerase catalyzes the transcription of DNA into RNA using the four ribonucleoside triphosphates as substrates. The polypeptide is DNA-directed RNA polymerase subunit beta (Streptomyces coelicolor (strain ATCC BAA-471 / A3(2) / M145)).